The following is a 126-amino-acid chain: Glycine cleavage system H protein (126 aa).

Residues 22 to 104 form the Lipoyl-binding domain; it reads VATVGITEYA…YEKAWMVKIE (83 aa). An N6-lipoyllysine modification is found at lysine 63.

This sequence belongs to the GcvH family. In terms of assembly, the glycine cleavage system is composed of four proteins: P, T, L and H. The cofactor is (R)-lipoate.

The glycine cleavage system catalyzes the degradation of glycine. The H protein shuttles the methylamine group of glycine from the P protein to the T protein. Functionally, is also involved in protein lipoylation via its role as an octanoyl/lipoyl carrier protein intermediate. The chain is Glycine cleavage system H protein from Staphylococcus epidermidis (strain ATCC 12228 / FDA PCI 1200).